Consider the following 389-residue polypeptide: Type II methyltransferase M1.ScrFI (389 aa).

Residues isoleucine 16–phenylalanine 71 form the HTH cro/C1-type domain. One can recognise an SAM-dependent MTase C5-type domain in the interval tyrosine 79 to serine 387. The active site involves cysteine 149.

Belongs to the class I-like SAM-binding methyltransferase superfamily. C5-methyltransferase family.

It catalyses the reaction a 2'-deoxycytidine in DNA + S-adenosyl-L-methionine = a 5-methyl-2'-deoxycytidine in DNA + S-adenosyl-L-homocysteine + H(+). A methylase, recognizes the double-stranded sequence 5'-CCNGG-3', methylates C-2 on both strands, and protects the DNA from cleavage by the ScrFI endonuclease. This Lactococcus lactis subsp. cremoris (Streptococcus cremoris) protein is Type II methyltransferase M1.ScrFI (scrFIAM).